The primary structure comprises 300 residues: ETS homologous factor (300 aa).

In terms of domain architecture, PNT spans 29-115 (STCNVSSGFF…SNLQHLKWNG (87 aa)). The segment at 183 to 202 (ESPDMKKEQDPPAKCHTKKH) is disordered. A compositionally biased stretch (basic and acidic residues) spans 185-195 (PDMKKEQDPPA). Residues 207-289 (THLWEFIRDI…DGRRLVYKFG (83 aa)) constitute a DNA-binding region (ETS).

The protein belongs to the ETS family.

It is found in the nucleus. Its function is as follows. Transcriptional activator that may play a role in regulating epithelial cell differentiation and proliferation. May act as a repressor for a specific subset of ETS/AP-1-responsive genes, and as a modulator of the nuclear response to mitogen-activated protein kinase signaling cascades. Binds to DNA sequences containing the consensus nucleotide core sequence GGAA. Involved in regulation of TNFRSF10B/DR5 expression through Ets-binding sequences on the TNFRSF10B/DR5 promoter. The protein is ETS homologous factor (EHF) of Pan paniscus (Pygmy chimpanzee).